We begin with the raw amino-acid sequence, 574 residues long: 2-succinyl-5-enolpyruvyl-6-hydroxy-3-cyclohexene-1-carboxylate synthase (574 aa).

It belongs to the TPP enzyme family. MenD subfamily. Homodimer. Mg(2+) is required as a cofactor. Mn(2+) serves as cofactor. Requires thiamine diphosphate as cofactor.

The enzyme catalyses isochorismate + 2-oxoglutarate + H(+) = 5-enolpyruvoyl-6-hydroxy-2-succinyl-cyclohex-3-ene-1-carboxylate + CO2. The protein operates within quinol/quinone metabolism; 1,4-dihydroxy-2-naphthoate biosynthesis; 1,4-dihydroxy-2-naphthoate from chorismate: step 2/7. It participates in cofactor biosynthesis; phylloquinone biosynthesis. Catalyzes the thiamine diphosphate-dependent decarboxylation of 2-oxoglutarate and the subsequent addition of the resulting succinic semialdehyde-thiamine pyrophosphate anion to isochorismate to yield 2-succinyl-5-enolpyruvyl-6-hydroxy-3-cyclohexene-1-carboxylate (SEPHCHC). This is 2-succinyl-5-enolpyruvyl-6-hydroxy-3-cyclohexene-1-carboxylate synthase from Synechococcus sp. (strain RCC307).